Consider the following 486-residue polypeptide: Cytochrome P450 monooxygenase aclC (486 aa).

Cys-427 is a binding site for heme.

It belongs to the cytochrome P450 family. Requires heme as cofactor.

It participates in mycotoxin biosynthesis. Cytochrome P450 monooxygenase; part of the gene cluster that mediates the biosynthesis of aspirochlorine (or antibiotic A30641), an unusual halogenated spiro compound with distinctive antifungal properties due to selective inhibition of protein biosynthesis, and which is also active against bacteria, viruses, and murine tumor cells. The non-ribosomal peptide synthetase (NRPS) aclP is responsible the formation of the diketopiperazine (DKP) core from the condensation of 2 phenylalanine residues. One Phe residue is tailored into chlorotyrosine by hydroxylation and chlorination, whereas the second Phe undergoes an unprecedented C-C bond cleavage to be converted into glycine. After formation of the DKP, sulfur is incorporated into the DKP by conjugation with glutathione by aclG, followed by its stepwise degradation to the thiol by aclI, aclJ and aclK, and the dithiol oxidation by aclT. In addition, oxygenases (aclB, aclC, aclL and aclO) and O-methyltransferases (aclM and aclU) act as tailoring enzymes to produce the intermediate dechloroaspirochlorine. Ultimately, chlorination of dechloroaspirochlorine by the halogenase aclH is the last step in the aspirochlorine pathway. The chain is Cytochrome P450 monooxygenase aclC from Aspergillus oryzae (strain ATCC 42149 / RIB 40) (Yellow koji mold).